A 248-amino-acid polypeptide reads, in one-letter code: 2,3-bisphosphoglycerate-dependent phosphoglycerate mutase (248 aa).

Residues 10-17 (RHGQSEWN), 23-24 (TG), Arg-62, 89-92 (ERHY), Lys-100, 116-117 (RR), and 183-184 (GN) contribute to the substrate site. Residue His-11 is the Tele-phosphohistidine intermediate of the active site. The active-site Proton donor/acceptor is Glu-89.

Belongs to the phosphoglycerate mutase family. BPG-dependent PGAM subfamily.

The enzyme catalyses (2R)-2-phosphoglycerate = (2R)-3-phosphoglycerate. Its pathway is carbohydrate degradation; glycolysis; pyruvate from D-glyceraldehyde 3-phosphate: step 3/5. Catalyzes the interconversion of 2-phosphoglycerate and 3-phosphoglycerate. The chain is 2,3-bisphosphoglycerate-dependent phosphoglycerate mutase from Corynebacterium diphtheriae (strain ATCC 700971 / NCTC 13129 / Biotype gravis).